We begin with the raw amino-acid sequence, 273 residues long: SKA complex subunit 1 homolog (273 aa).

Residues K77–L97 are a coiled coil.

This sequence belongs to the SKA1 family.

The sequence is that of SKA complex subunit 1 homolog from Zea mays (Maize).